The primary structure comprises 511 residues: Glucans biosynthesis protein G (511 aa).

The N-terminal stretch at 1–22 (MMKMRWLSAAVMLTLYTSSSWA) is a signal peptide.

The protein belongs to the OpgD/OpgG family.

Its subcellular location is the periplasm. It participates in glycan metabolism; osmoregulated periplasmic glucan (OPG) biosynthesis. Its function is as follows. Involved in the biosynthesis of osmoregulated periplasmic glucans (OPGs). This chain is Glucans biosynthesis protein G, found in Escherichia fergusonii (strain ATCC 35469 / DSM 13698 / CCUG 18766 / IAM 14443 / JCM 21226 / LMG 7866 / NBRC 102419 / NCTC 12128 / CDC 0568-73).